The primary structure comprises 629 residues: tRNA uridine 5-carboxymethylaminomethyl modification enzyme MnmG (629 aa).

An FAD-binding site is contributed by 4-9 (GGGHAG). NAD(+) is bound at residue 268 to 282 (GPRYCPSIEDKVNRF).

It belongs to the MnmG family. Homodimer. Heterotetramer of two MnmE and two MnmG subunits. FAD is required as a cofactor.

The protein localises to the cytoplasm. NAD-binding protein involved in the addition of a carboxymethylaminomethyl (cmnm) group at the wobble position (U34) of certain tRNAs, forming tRNA-cmnm(5)s(2)U34. The polypeptide is tRNA uridine 5-carboxymethylaminomethyl modification enzyme MnmG (Helicobacter hepaticus (strain ATCC 51449 / 3B1)).